A 277-amino-acid chain; its full sequence is Undecaprenyl-diphosphatase (277 aa).

Helical transmembrane passes span 85-105 (VNIV…AGAI), 109-129 (LFAP…ILWV), 188-208 (ATEF…VYSV), 218-238 (ADIP…FLCV), and 256-276 (YRIG…VVWA).

It belongs to the UppP family.

The protein localises to the cell inner membrane. The enzyme catalyses di-trans,octa-cis-undecaprenyl diphosphate + H2O = di-trans,octa-cis-undecaprenyl phosphate + phosphate + H(+). In terms of biological role, catalyzes the dephosphorylation of undecaprenyl diphosphate (UPP). Confers resistance to bacitracin. This chain is Undecaprenyl-diphosphatase, found in Herminiimonas arsenicoxydans.